We begin with the raw amino-acid sequence, 411 residues long: Growth-regulating factor 7 (411 aa).

The QLQ domain maps to 38 to 73 (PFTPTQWMELEHQALIYKHIVANAPVPAGLLLPIRR). The WRC domain occupies 108–152 (DSEPGRCRRTDGKKWRCSRDAVVDQKYCERHINRGRHRSRKHVEG). 2 consecutive short sequence motifs (bipartite nuclear localization signal) follow at residues 113-123 (RCRRTDGKKWR) and 141-148 (RGRHRSRK). The interval 333–369 (FFTNTSSASDDKGKSRHPPSLNLLADGHTTSPQLQSP) is disordered. Residues 360-369 (HTTSPQLQSP) are compositionally biased toward polar residues.

Belongs to the GRF family.

The protein localises to the nucleus. Its function is as follows. Transcription activator that plays a regulatory role in gibberellin-induced stem elongation. The chain is Growth-regulating factor 7 (GRF7) from Oryza sativa subsp. japonica (Rice).